Consider the following 432-residue polypeptide: MQVSVETTQGLGRRVTITIAADSIETAVKSELVNVAKKVRIDGFRKGKVPMNIVAQRYGASVRQDVLGDLMSRHFIDAIIKEKINPAGAPNYVPGEYKPGEDFTYAVEFEVYPEIELKDLETIEVEKPIVEVTDADVDMMLDTLRKQQATWKEKDGAADAEDRVTIDFTGSVDGEEFEGGKASDFVLAMGQGRMIPGFEDGIKGHKAGEEFTIDVTFPEDYHAENLKGKAAKFAINLKKVEERELPELTEDFIKRFGVEDGSVEGLRAEVRKNMERELKGAVRNRVKSQAIEGLVKANDIDVPAALIDSEIDVLRRQAAQRFGGNEKQALELPRELFEEQAKRRVVVGLLLGEVIRTNELKADEERVKGLIEEMASAYEDPKEVIEFYSKNKELMDNMRNVALEEQAVEAVLAKAKVTEKETTFNELMNQQA.

The PPIase FKBP-type domain occupies E161–P246.

The protein belongs to the FKBP-type PPIase family. Tig subfamily. In terms of assembly, homodimer and monomer. In vivo most of the ribosomes are in complex with monomeric TF. Uncomplexed TF, however, is in a monomer-dimer equilibrium with approximately two thirds of TF existing in a dimeric state.

The protein resides in the cytoplasm. It carries out the reaction [protein]-peptidylproline (omega=180) = [protein]-peptidylproline (omega=0). Involved in protein export. Acts as a chaperone by maintaining the newly synthesized protein in an open conformation. Functions as a peptidyl-prolyl cis-trans isomerase. This Escherichia fergusonii (strain ATCC 35469 / DSM 13698 / CCUG 18766 / IAM 14443 / JCM 21226 / LMG 7866 / NBRC 102419 / NCTC 12128 / CDC 0568-73) protein is Trigger factor.